The following is a 189-amino-acid chain: GTPase NRas (189 aa).

10 to 17 (GAGGVGKS) is a binding site for GTP. The short motif at 32 to 40 (YDPTIEDSY) is the Effector region element. GTP-binding positions include 57–61 (DTAGQ) and 116–119 (NKCD). The hypervariable region stretch occupies residues 166–185 (YRMKKLNSNEDGNQGCMGLS). Cysteine 181 carries S-palmitoyl cysteine lipidation. Cysteine 186 carries the S-farnesyl cysteine lipid modification. A propeptide spans 187–189 (IVM) (removed in mature form).

The protein belongs to the small GTPase superfamily. Ras family. In terms of processing, palmitoylated by the ZDHHC9-GOLGA7 complex. Depalmitoylated by ABHD17A, ABHD17B and ABHD17C. A continuous cycle of de- and re-palmitoylation regulates rapid exchange between plasma membrane and Golgi.

Its subcellular location is the cell membrane. It localises to the golgi apparatus membrane. The catalysed reaction is GTP + H2O = GDP + phosphate + H(+). Alternates between an inactive form bound to GDP and an active form bound to GTP. Activated by a guanine nucleotide-exchange factor (GEF) and inactivated by a GTPase-activating protein (GAP). In terms of biological role, ras proteins bind GDP/GTP and possess intrinsic GTPase activity. This is GTPase NRas (NRAS) from Gallus gallus (Chicken).